Here is a 392-residue protein sequence, read N- to C-terminus: 8-amino-7-oxononanoate synthase (392 aa).

Arg26 contacts substrate. Pyridoxal 5'-phosphate is bound at residue 113 to 114 (GY). His138 contacts substrate. Pyridoxal 5'-phosphate is bound by residues Ser186, His214, and Thr241. N6-(pyridoxal phosphate)lysine is present on Lys244. Thr353 provides a ligand contact to substrate.

This sequence belongs to the class-II pyridoxal-phosphate-dependent aminotransferase family. BioF subfamily. As to quaternary structure, homodimer. Pyridoxal 5'-phosphate serves as cofactor.

It catalyses the reaction 6-carboxyhexanoyl-[ACP] + L-alanine + H(+) = (8S)-8-amino-7-oxononanoate + holo-[ACP] + CO2. Its pathway is cofactor biosynthesis; biotin biosynthesis. Functionally, catalyzes the decarboxylative condensation of pimeloyl-[acyl-carrier protein] and L-alanine to produce 8-amino-7-oxononanoate (AON), [acyl-carrier protein], and carbon dioxide. The sequence is that of 8-amino-7-oxononanoate synthase from Maricaulis maris (strain MCS10) (Caulobacter maris).